The following is a 205-amino-acid chain: Holliday junction branch migration complex subunit RuvA (205 aa).

The domain I stretch occupies residues 1–64 (MIGKLKGTID…EDQLKLFGFM (64 aa)). Residues 65–143 (SALEREWFNL…AFTGDAGSAI (79 aa)) form a domain II region. The segment at 144–153 (GLKQELGEGV) is flexible linker. The segment at 153–205 (VASAPVSDAVSALTNLGYSRDQAANAIAAALKNGGEGADSAKLIRLGLKELSR) is domain III.

The protein belongs to the RuvA family. Homotetramer. Forms an RuvA(8)-RuvB(12)-Holliday junction (HJ) complex. HJ DNA is sandwiched between 2 RuvA tetramers; dsDNA enters through RuvA and exits via RuvB. An RuvB hexamer assembles on each DNA strand where it exits the tetramer. Each RuvB hexamer is contacted by two RuvA subunits (via domain III) on 2 adjacent RuvB subunits; this complex drives branch migration. In the full resolvosome a probable DNA-RuvA(4)-RuvB(12)-RuvC(2) complex forms which resolves the HJ.

The protein localises to the cytoplasm. In terms of biological role, the RuvA-RuvB-RuvC complex processes Holliday junction (HJ) DNA during genetic recombination and DNA repair, while the RuvA-RuvB complex plays an important role in the rescue of blocked DNA replication forks via replication fork reversal (RFR). RuvA specifically binds to HJ cruciform DNA, conferring on it an open structure. The RuvB hexamer acts as an ATP-dependent pump, pulling dsDNA into and through the RuvAB complex. HJ branch migration allows RuvC to scan DNA until it finds its consensus sequence, where it cleaves and resolves the cruciform DNA. The sequence is that of Holliday junction branch migration complex subunit RuvA from Allorhizobium ampelinum (strain ATCC BAA-846 / DSM 112012 / S4) (Agrobacterium vitis (strain S4)).